Here is a 229-residue protein sequence, read N- to C-terminus: Indole-3-glycerol phosphate synthase (229 aa).

Belongs to the TrpC family.

The enzyme catalyses 1-(2-carboxyphenylamino)-1-deoxy-D-ribulose 5-phosphate + H(+) = (1S,2R)-1-C-(indol-3-yl)glycerol 3-phosphate + CO2 + H2O. The protein operates within amino-acid biosynthesis; L-tryptophan biosynthesis; L-tryptophan from chorismate: step 4/5. The protein is Indole-3-glycerol phosphate synthase of Pyrococcus abyssi (strain GE5 / Orsay).